The primary structure comprises 87 residues: Omega-lycotoxin-Am1g (87 aa).

The first 17 residues, 1–17 (MKLSIFFVLFFIAIAYC), serve as a signal peptide directing secretion. Positions 18-40 (QPEFLDDEEDEVEETLPVAEEGR) are excised as a propeptide. 4 cysteine pairs are disulfide-bonded: cysteine 44-cysteine 59, cysteine 51-cysteine 64, cysteine 58-cysteine 84, and cysteine 66-cysteine 82.

Belongs to the neurotoxin omega-lctx family. Expressed by the venom gland.

The protein resides in the secreted. Functionally, modulates Cav2.1/CACNA1A voltage-gated calcium channels (P/Q-type currents) in rat cerebellar Purkinje cells and hippocampal CA1-CA3 neurons. At saturating concentrations (&gt;10 nM) decelerates activation kinetics and slightly increases peak amplitude without affecting deactivation kinetics. In vivo, does not cause death when intravenously injected into mice. In rat models, through its activity on Cav2.1/CACNA1A, has an ameliorative effect on memory defects provoked by hyperstimulation of N-methyl-D-aspartate receptors (NMDARs) in the hippocampus. This is Omega-lycotoxin-Am1g from Alopecosa marikovskyi (Wolf spider).